Consider the following 311-residue polypeptide: UDP-N-acetylenolpyruvoylglucosamine reductase (311 aa).

The FAD-binding PCMH-type domain occupies 29–191 (IGGKADIVLK…LSARLKLKPI (163 aa)). R172 is a catalytic residue. S223 functions as the Proton donor in the catalytic mechanism. The active site involves E299.

It belongs to the MurB family. It depends on FAD as a cofactor.

The protein resides in the cytoplasm. The catalysed reaction is UDP-N-acetyl-alpha-D-muramate + NADP(+) = UDP-N-acetyl-3-O-(1-carboxyvinyl)-alpha-D-glucosamine + NADPH + H(+). It functions in the pathway cell wall biogenesis; peptidoglycan biosynthesis. Cell wall formation. This is UDP-N-acetylenolpyruvoylglucosamine reductase from Chloroherpeton thalassium (strain ATCC 35110 / GB-78).